A 254-amino-acid polypeptide reads, in one-letter code: DNA repair protein RecO (254 aa).

This sequence belongs to the RecO family.

Its function is as follows. Involved in DNA repair and RecF pathway recombination. This is DNA repair protein RecO from Rhodopseudomonas palustris (strain BisB18).